A 676-amino-acid chain; its full sequence is MGTEIPRSAEISEALLPPESEKTVTATEEHVPEWKEQITIRGLTVSALLGTLFCIITHKLNLTVGIIPSLNVAAGLLGFFFVKSWTGFLSKLGFTVKPFTKQENTVIQTCVVACYGLAFSGGFGSYLIAMDEKTYKLIGADYPGNHAEDVINPGLWWMIGFLFVVSFLGLFSLVPLRKVMVLDYKLTYPSGTATAMLINSFHTNTGAELAGNQVKCLGKYLSLSLIWSCFKWFFSGIGDACGFDNFPTLGLTLFKNTFYFDFSPTYIGCGLICPHIVNCSVLLGAIISWGILWPFVSQHAGDWYPADLGSNDFKGLYGYKVFIAIAIILGDGLYNLVKIIAVTVKELCSSRSRRLNLPIVTDGVDDSEASEILLVKKKRDEVFLKDRIPLEFAIAGYVGLAAISTATIPIIFPPLKWYFVLCSYFIAPALAFCNSYGTGLTDWSLASTYGKIGLFIIASVVGSDGGVIAGLAACGVMMSIVSTAADLMQDFKTGYLTLSSAKSMFVSQLVGTAMGCVIAPLTFWLFWTAFDIGDPNGPYKAPYAVIFREMAILGIEGFAELPKHCLALCYGFFIAALIVNLLRDITPPKISQFIPIPMAMAVPFYIGAYFAIDMFVGTVILFVWERINRKDAEDFAGAVASGLICGDGIWTIPSAILSILRINPPICMYFGPSSAR.

Transmembrane regions (helical) follow at residues 38–58, 62–82, 110–130, 154–174, 276–296, 321–341, 392–412, 413–433, 452–472, 510–530, 561–581, 604–624, and 639–659; these read ITIR…IITH, LTVG…FFFV, CVVA…LIAM, GLWW…FSLV, IVNC…WPFV, VFIA…KIIA, FAIA…PIIF, PPLK…LAFC, IGLF…AGLA, VGTA…WTAF, LPKH…IVNL, FYIG…LFVW, and VASG…ILSI.

This sequence belongs to the YSL (TC 2.A.67.2) family.

The protein localises to the membrane. Its function is as follows. May be involved in the transport of nicotianamine-chelated metals. This chain is Probable metal-nicotianamine transporter YSL6 (YSL6), found in Arabidopsis thaliana (Mouse-ear cress).